Consider the following 417-residue polypeptide: Glutamyl-tRNA reductase (417 aa).

Residues 49–52 (TCNR), Ser-109, 114–116 (ESQ), and Gln-120 contribute to the substrate site. Cys-50 functions as the Nucleophile in the catalytic mechanism. 189 to 194 (GLGEIG) provides a ligand contact to NADP(+).

The protein belongs to the glutamyl-tRNA reductase family. In terms of assembly, homodimer.

It carries out the reaction (S)-4-amino-5-oxopentanoate + tRNA(Glu) + NADP(+) = L-glutamyl-tRNA(Glu) + NADPH + H(+). The protein operates within porphyrin-containing compound metabolism; protoporphyrin-IX biosynthesis; 5-aminolevulinate from L-glutamyl-tRNA(Glu): step 1/2. Catalyzes the NADPH-dependent reduction of glutamyl-tRNA(Glu) to glutamate 1-semialdehyde (GSA). This is Glutamyl-tRNA reductase from Streptococcus sanguinis (strain SK36).